The sequence spans 227 residues: Protein CAP22 (227 aa).

N-linked (GlcNAc...) asparagine glycans are attached at residues N55 and N72. A disordered region spans residues 143–162 (TTIGGGATPAPTSERSRTSD).

The protein localises to the secreted. It localises to the cell wall. This chain is Protein CAP22 (CAP22), found in Colletotrichum gloeosporioides (Anthracnose fungus).